A 269-amino-acid polypeptide reads, in one-letter code: Formamidopyrimidine-DNA glycosylase (269 aa).

Residue Pro2 is the Schiff-base intermediate with DNA of the active site. Glu3 (proton donor) is an active-site residue. Lys57 acts as the Proton donor; for beta-elimination activity in catalysis. Residues His90, Arg109, and Lys150 each coordinate DNA. The segment at 235-269 (QVYGRKGEPCRICGMPVVGTKHAQRATFYCRQCQK) adopts an FPG-type zinc-finger fold. Arg259 (proton donor; for delta-elimination activity) is an active-site residue.

Belongs to the FPG family. Monomer. Zn(2+) is required as a cofactor.

The catalysed reaction is Hydrolysis of DNA containing ring-opened 7-methylguanine residues, releasing 2,6-diamino-4-hydroxy-5-(N-methyl)formamidopyrimidine.. It catalyses the reaction 2'-deoxyribonucleotide-(2'-deoxyribose 5'-phosphate)-2'-deoxyribonucleotide-DNA = a 3'-end 2'-deoxyribonucleotide-(2,3-dehydro-2,3-deoxyribose 5'-phosphate)-DNA + a 5'-end 5'-phospho-2'-deoxyribonucleoside-DNA + H(+). Involved in base excision repair of DNA damaged by oxidation or by mutagenic agents. Acts as a DNA glycosylase that recognizes and removes damaged bases. Has a preference for oxidized purines, such as 7,8-dihydro-8-oxoguanine (8-oxoG). Has AP (apurinic/apyrimidinic) lyase activity and introduces nicks in the DNA strand. Cleaves the DNA backbone by beta-delta elimination to generate a single-strand break at the site of the removed base with both 3'- and 5'-phosphates. This Klebsiella pneumoniae subsp. pneumoniae (strain ATCC 700721 / MGH 78578) protein is Formamidopyrimidine-DNA glycosylase.